The primary structure comprises 382 residues: Succinate--CoA ligase [ADP-forming] subunit beta (382 aa).

Residues 9-237 (RDLLARYGIP…PSAEPEAERR (229 aa)) enclose the ATP-grasp domain. ATP-binding positions include lysine 45, 52 to 54 (GRG), isoleucine 94, and glutamate 99. Positions 192 and 206 each coordinate Mg(2+). Substrate is bound by residues asparagine 257 and 314–316 (GIT).

It belongs to the succinate/malate CoA ligase beta subunit family. Heterotetramer of two alpha and two beta subunits. Mg(2+) serves as cofactor.

The enzyme catalyses succinate + ATP + CoA = succinyl-CoA + ADP + phosphate. The catalysed reaction is GTP + succinate + CoA = succinyl-CoA + GDP + phosphate. It participates in carbohydrate metabolism; tricarboxylic acid cycle; succinate from succinyl-CoA (ligase route): step 1/1. Succinyl-CoA synthetase functions in the citric acid cycle (TCA), coupling the hydrolysis of succinyl-CoA to the synthesis of either ATP or GTP and thus represents the only step of substrate-level phosphorylation in the TCA. The beta subunit provides nucleotide specificity of the enzyme and binds the substrate succinate, while the binding sites for coenzyme A and phosphate are found in the alpha subunit. The sequence is that of Succinate--CoA ligase [ADP-forming] subunit beta from Chloroflexus aggregans (strain MD-66 / DSM 9485).